The sequence spans 328 residues: tRNA dimethylallyltransferase (328 aa).

Residue 23-30 (GPTASGKS) coordinates ATP. 25–30 (TASGKS) is a substrate binding site. An interaction with substrate tRNA region spans residues 48 to 51 (DSMQ).

Belongs to the IPP transferase family. As to quaternary structure, monomer. Mg(2+) serves as cofactor.

The catalysed reaction is adenosine(37) in tRNA + dimethylallyl diphosphate = N(6)-dimethylallyladenosine(37) in tRNA + diphosphate. Functionally, catalyzes the transfer of a dimethylallyl group onto the adenine at position 37 in tRNAs that read codons beginning with uridine, leading to the formation of N6-(dimethylallyl)adenosine (i(6)A). This Rhodopseudomonas palustris (strain BisA53) protein is tRNA dimethylallyltransferase.